Reading from the N-terminus, the 338-residue chain is Egl nine homolog 1 (338 aa).

Residues Pro1–Arg11 show a composition bias toward low complexity. Residues Pro1 to Gln99 form a disordered region. Ser52 is subject to Phosphoserine. 2 positions are modified to S-nitrosocysteine: Cys116 and Cys123. The beta(2)beta(3) 'finger-like' loop stretch occupies residues Val156 to Ile166. A Fe2OG dioxygenase domain is found at Gly209–Asp307. Cys217 carries the post-translational modification S-nitrosocysteine. Fe cation contacts are provided by His228 and Asp230. An S-nitrosocysteine mark is found at Cys238 and Cys241. His289 is a Fe cation binding site. Arg298 contacts 2-oxoglutarate.

Monomer. Interacts with ING4; the interaction inhibits the hydroxylation of HIF alpha proteins. Interacts with PTGES3 (via PXLE motif); thereby recruiting EGLN1 to the HSP90 pathway to facilitate HIF alpha proteins hydroxylation. Interacts with LIMD1. Found in a complex composed of LIMD1, VHL, EGLN1/PHD2, ELOB and CUL2. Interacts with EPAS1. Interacts with CBFA2T3 and HIF1A. Fe(2+) serves as cofactor. The cofactor is L-ascorbate. S-nitrosylation inhibits the enzyme activity up to 60% under aerobic conditions. Chelation of Fe(2+) has no effect on the S-nitrosylation. It is uncertain whether nitrosylation occurs on Cys-238 or Cys-241. In terms of tissue distribution, expressed in heart, liver, kidney, brain, liver and testis. Highest levels in heart, lowest in liver.

The protein resides in the cytoplasm. The protein localises to the nucleus. It catalyses the reaction L-prolyl-[hypoxia-inducible factor alpha subunit] + 2-oxoglutarate + O2 = trans-4-hydroxy-L-prolyl-[hypoxia-inducible factor alpha subunit] + succinate + CO2. With respect to regulation, increased activation in hypoxia. Hydroxylation of the C-terminal ODD domain (CODD) proline of HIF1A is activated by cyclosporin A (CsA). In terms of biological role, cellular oxygen sensor that catalyzes, under normoxic conditions, the post-translational formation of 4-hydroxyproline in hypoxia-inducible factor (HIF) alpha proteins. Hydroxylates a specific proline found in each of the oxygen-dependent degradation (ODD) domains (N-terminal, NODD, and C-terminal, CODD) of HIF1A. Also hydroxylates HIF2A. Has a preference for the CODD site for both HIF1A and HIF1B. Hydroxylated HIFs are then targeted for proteasomal degradation via the von Hippel-Lindau ubiquitination complex. Under hypoxic conditions, the hydroxylation reaction is attenuated allowing HIFs to escape degradation resulting in their translocation to the nucleus, heterodimerization with HIF1B, and increased expression of hypoxy-inducible genes. EGLN1 is the most important isozyme under normoxia and, through regulating the stability of HIF1, involved in various hypoxia-influenced processes such as angiogenesis in retinal and cardiac functionality. Target proteins are preferentially recognized via a LXXLAP motif. In Rattus norvegicus (Rat), this protein is Egl nine homolog 1 (Egln1).